We begin with the raw amino-acid sequence, 279 residues long: MVTVFGILNLTEDSFFDESRRLDPAGAVTAAIEMLRVGSDVVDVGPAASHPDARPVSPADEIRRIAPLLDALSDQMHRVSIDSFQPETQRYALKRGVGYLNDIQGFPDPALYPDIAEADCRLVVMHSAQRDGIATRTGHLRPEDALDEIVRFFEARVSALRRSGVAADRLILDPGMGFFLSPAPETSLHVLSNLQKLKSALGLPLLVSVSRKSFLGATVGLPVKDLGPASLAAELHAIGNGADYVRTHAPGDLRSAITFSETLAKFRSRDARDRGLDHA.

A Pterin-binding domain is found at 1–258; sequence MVTVFGILNL…APGDLRSAIT (258 aa). A Mg(2+)-binding site is contributed by asparagine 9. Residues aspartate 82, asparagine 101, aspartate 173, lysine 212, and 246 to 248 contribute to the (7,8-dihydropterin-6-yl)methyl diphosphate site; that span reads RTH.

This sequence belongs to the DHPS family. In terms of assembly, homodimer or homotrimer. The cofactor is Mg(2+).

The enzyme catalyses (7,8-dihydropterin-6-yl)methyl diphosphate + 4-aminobenzoate = 7,8-dihydropteroate + diphosphate. It functions in the pathway cofactor biosynthesis; tetrahydrofolate biosynthesis; 7,8-dihydrofolate from 2-amino-4-hydroxy-6-hydroxymethyl-7,8-dihydropteridine diphosphate and 4-aminobenzoate: step 1/2. In terms of biological role, catalyzes the condensation of para-aminobenzoate (pABA) with 6-hydroxymethyl-7,8-dihydropterin diphosphate (DHPt-PP) to form 7,8-dihydropteroate (H2Pte), the immediate precursor of folate derivatives. This is Dihydropteroate synthase type-1 (sulI) from Corynebacterium glutamicum (Brevibacterium saccharolyticum).